Here is a 160-residue protein sequence, read N- to C-terminus: Phosphopantetheine adenylyltransferase (160 aa).

Ser10 contributes to the substrate binding site. ATP is bound by residues 10 to 11 (SF) and His18. Residues Lys42, Leu74, and Arg88 each coordinate substrate. Residues 89-91 (GLR), Glu99, and 124-130 (YSFLSSS) contribute to the ATP site.

It belongs to the bacterial CoaD family. Homohexamer. Mg(2+) serves as cofactor.

The protein resides in the cytoplasm. It catalyses the reaction (R)-4'-phosphopantetheine + ATP + H(+) = 3'-dephospho-CoA + diphosphate. It participates in cofactor biosynthesis; coenzyme A biosynthesis; CoA from (R)-pantothenate: step 4/5. In terms of biological role, reversibly transfers an adenylyl group from ATP to 4'-phosphopantetheine, yielding dephospho-CoA (dPCoA) and pyrophosphate. This chain is Phosphopantetheine adenylyltransferase, found in Bacillus pumilus (strain SAFR-032).